Here is a 373-residue protein sequence, read N- to C-terminus: MKKDYYEILGLTKSASKDEIKKAYRTLAKTYHPDVNKETNAEEKFKEITEAYEILNDDVKREQYNQFGHAAFDPNAGGFGGQNPFTNAEGFSGFSDFSGFGSIFTDFFGGFGNSQRANPNRAQRGEDRHAVIKISFIDSVLGKEIVEPLEKFETCNTCNGSGAKSQSDIITCTQCSGMGEQIKITKTFLGQMQQNVICSKCNGIGKEIVEKCLICKGKTHTKTTKNITIKIPAGIQNGQTLRVENYGNAGLNGGSNGNLILSIKVSPHKHFVRKNNDIILRLPVSIKSVIGSEKVEVPTPYGFEIIKIDPNIKTGDELIIKNKGIITKYESGKMIVIFEIFIPKLTSFEKKEISTILEKNADKFYEKWIKEFE.

A J domain is found at 4-68 (DYYEILGLTK…VKREQYNQFG (65 aa)). A CR-type zinc finger spans residues 142–224 (GKEIVEPLEK…CKGKTHTKTT (83 aa)). Zn(2+) is bound by residues Cys-155, Cys-158, Cys-172, Cys-175, Cys-198, Cys-201, Cys-212, and Cys-215. 4 CXXCXGXG motif repeats span residues 155 to 162 (CNTCNGSG), 172 to 179 (CTQCSGMG), 198 to 205 (CSKCNGIG), and 212 to 219 (CLICKGKT).

It belongs to the DnaJ family. As to quaternary structure, homodimer. Zn(2+) is required as a cofactor.

The protein resides in the cytoplasm. Functionally, participates actively in the response to hyperosmotic and heat shock by preventing the aggregation of stress-denatured proteins and by disaggregating proteins, also in an autonomous, DnaK-independent fashion. Unfolded proteins bind initially to DnaJ; upon interaction with the DnaJ-bound protein, DnaK hydrolyzes its bound ATP, resulting in the formation of a stable complex. GrpE releases ADP from DnaK; ATP binding to DnaK triggers the release of the substrate protein, thus completing the reaction cycle. Several rounds of ATP-dependent interactions between DnaJ, DnaK and GrpE are required for fully efficient folding. Also involved, together with DnaK and GrpE, in the DNA replication of plasmids through activation of initiation proteins. The sequence is that of Chaperone protein DnaJ from Mycoplasma mobile (strain ATCC 43663 / 163K / NCTC 11711) (Mesomycoplasma mobile).